We begin with the raw amino-acid sequence, 716 residues long: Polyribonucleotide nucleotidyltransferase (716 aa).

D490 and D496 together coordinate Mg(2+). A KH domain is found at 556–615 (PKIETLTIPTDKIREVIGSGGKVIREIVETSGAKVDINDDGVIKIASNDQAAIKKAYDMI). Positions 625–693 (GQIYTGKVVK…ERGKVRLGMK (69 aa)) constitute an S1 motif domain. A disordered region spans residues 695-716 (VDQETGQEIQPEKKEREEAGEA). The segment covering 704–716 (QPEKKEREEAGEA) has biased composition (basic and acidic residues).

Belongs to the polyribonucleotide nucleotidyltransferase family. The cofactor is Mg(2+).

The protein resides in the cytoplasm. The enzyme catalyses RNA(n+1) + phosphate = RNA(n) + a ribonucleoside 5'-diphosphate. In terms of biological role, involved in mRNA degradation. Catalyzes the phosphorolysis of single-stranded polyribonucleotides processively in the 3'- to 5'-direction. The protein is Polyribonucleotide nucleotidyltransferase of Cereibacter sphaeroides (strain KD131 / KCTC 12085) (Rhodobacter sphaeroides).